A 623-amino-acid chain; its full sequence is Protein skinhead-1 (623 aa).

4 disordered regions span residues 1 to 29 (MGGSSRRQRSTSATRRDDKRRRRQCFSSV), 158 to 184 (TEHPPASPFGRGPSTERPTTSSRYEYS), 421 to 451 (YQSTGQTPLSPLIIGSSGRQQQTQTSPGSVT), and 467 to 557 (QRHS…LASD). The residue at position 164 (S164) is a Phosphoserine; by pmk-1. Residues 173 to 184 (ERPTTSSRYEYS) show a composition bias toward polar residues. S430 is modified (phosphoserine; by pmk-1). Composition is skewed to low complexity over residues 435–449 (GSSGRQQQTQTSPGS), 472–498 (SDCTTDSSSTCSRLSSESPRYTSESST), and 511–529 (PSSGSRYQRSSSPRSSQSS). Residues 540-623 (SGQRKRGRQS…DRHDKMSHYI (84 aa)) form a basic motif region.

It belongs to the bZIP family. Skn1 subfamily. As to quaternary structure, monomer. Interacts with GATA factor elt-3; interaction may enhance transcriptional activation of target genes. Interacts with pgma-5. Interacts with transcription factor mxl-3 (via N-terminus). In terms of processing, cleaved by the aspartic protease ddi-1. Postembryonic intestinal cells.

The protein localises to the nucleus. Its subcellular location is the cytoplasm. The protein resides in the mitochondrion. Transcription factor. Required to specify the fate of ventral blastomeres in the early embryo, and postembryonically for the development of the intestine. Directly regulates expression of zygotically expressed med-1 and med-2 to direct mesendoderm development. In response to oxidative stress and anoxia, required to up-regulate expression of stl-1 mRNA. Involved in regulating innate immunity, acting downstream of the pmk-1 p38/MAPK pathway and probably also downstream of nipi-3. Required for the up-regulation of phase II detoxification genes, including gcs-1 and several glutathione-S-transferase mRNAs in response to oxidative stress generated during pathogenic bacterial infection. Modulates oxidative stress responses in concert with transcription factors such as hcf-1 and elt-3. Regulates the transcription of genes associated with metabolism in response to changes in nutrient availability. In neurons, involved in mitochondrial fusion and behavioral recovery during reoxygenation. Required for riok-1 mRNA expression in the intestine. Downstream of the let-60/Ras, mek-2 and pmk-1 pathway, positively regulates lifespan probably by preventing transcription of insulin-like peptides such as ins-39. Prevents degeneration of dopaminergic CEP neurons in response to high Al(3+) or Mn(2+) levels, probably by promoting the expression of glutathione-S-transferase gst-1. In terms of biological role, directed by the ER-associated degradation pathway (ERAD), mediates proteasomal homeostasis by regulating the expression of proteasomal subunits such as rpt-3 to confer resistance to proteasomal dysfunction. The polypeptide is Protein skinhead-1 (skn-1) (Caenorhabditis elegans).